The primary structure comprises 1712 residues: Latent-transforming growth factor beta-binding protein 1 (1712 aa).

An N-terminal signal peptide occupies residues 1-20 (MAGAWLRWGLLLWAGLLAWS). The segment at 63–148 (SSTATSSRSL…QDTQSSGGSR (86 aa)) is disordered. The span at 136–147 (KVQQDTQSSGGS) shows a compositional bias: polar residues. The region spanning 181-213 (TKPSCVPPCQNGGMCLRPQFCVCKPGTKGKACE) is the EGF-like 1 domain. 3 disulfides stabilise this stretch: cysteine 185/cysteine 195, cysteine 189/cysteine 201, and cysteine 203/cysteine 212. N-linked (GlcNAc...) asparagine glycosylation is found at asparagine 339 and asparagine 370. One can recognise an EGF-like 2 domain in the interval 391 to 423 (RVVICHLPCMNGGQCSSRDKCQCPPNFTGKLCQ). 6 disulfides stabilise this stretch: cysteine 395–cysteine 405, cysteine 399–cysteine 411, cysteine 413–cysteine 422, cysteine 551–cysteine 573, cysteine 560–cysteine 586, and cysteine 574–cysteine 589. Asparagine 416 carries an N-linked (GlcNAc...) asparagine glycan. One can recognise a TB 1 domain in the interval 549-601 (GRCFQETIGSQCGKALPGLSKQEDCCGTVGTSWGFNKCQKCPKKQSYHGYTQM). N-linked (GlcNAc...) asparagine glycosylation is present at asparagine 612. Positions 618–658 (DINECQLQGVCPNGECLNTMGSYRCSCKMGFGPDPTFSSCV) constitute an EGF-like 3; calcium-binding domain. Cystine bridges form between cysteine 622-cysteine 633, cysteine 628-cysteine 642, cysteine 644-cysteine 657, cysteine 671-cysteine 694, cysteine 681-cysteine 706, cysteine 695-cysteine 709, and cysteine 696-cysteine 721. An O-linked (Glc) serine glycan is attached at serine 639. The region spanning 669-721 (GPCYRLVSPGRQCMHPLSVHLTKQICCCSVGKAWGPQCEKCPLPGTAAFKEIC) is the TB 2 domain. The tract at residues 752-803 (KNTQPVAKSTHPPPLPAKEEPVEALTSSREHGPGVAEPEVVTAPPEKEIPSL) is disordered. Residues threonine 761 and threonine 793 are each glycosylated (O-linked (GalNAc...) threonine). The 42-residue stretch at 865-906 (EINECTVNPDICGAGHCINLPVRYTCICYEGYKFSEQQRKCI) folds into the EGF-like 4; calcium-binding domain. Intrachain disulfides connect cysteine 869–cysteine 881, cysteine 876–cysteine 890, cysteine 892–cysteine 905, cysteine 911–cysteine 923, cysteine 918–cysteine 932, cysteine 934–cysteine 947, cysteine 953–cysteine 964, cysteine 959–cysteine 973, cysteine 976–cysteine 988, cysteine 994–cysteine 1005, cysteine 1000–cysteine 1014, cysteine 1017–cysteine 1028, cysteine 1034–cysteine 1045, cysteine 1040–cysteine 1054, cysteine 1056–cysteine 1069, cysteine 1075–cysteine 1086, cysteine 1081–cysteine 1095, cysteine 1097–cysteine 1110, cysteine 1116–cysteine 1127, cysteine 1122–cysteine 1136, cysteine 1138–cysteine 1151, cysteine 1157–cysteine 1169, cysteine 1164–cysteine 1178, cysteine 1180–cysteine 1192, cysteine 1198–cysteine 1210, cysteine 1204–cysteine 1219, cysteine 1221–cysteine 1234, cysteine 1240–cysteine 1252, cysteine 1246–cysteine 1261, cysteine 1263–cysteine 1276, cysteine 1282–cysteine 1294, cysteine 1289–cysteine 1303, cysteine 1305–cysteine 1319, cysteine 1340–cysteine 1363, cysteine 1350–cysteine 1375, cysteine 1364–cysteine 1380, and cysteine 1365–cysteine 1392. In terms of domain architecture, EGF-like 5; calcium-binding spans 907–948 (DIDECAQAQHLCSQGRCENTEGSFLCICPAGFIASEEGSNCI). An O-linked (Glc) serine glycan is attached at serine 929. The EGF-like 6; calcium-binding domain occupies 949-989 (DVDECLRPDVCRDGRCINTAGAFRCEYCDSGYRMSRRGHCE). Residue asparagine 966 is modified to (3R)-3-hydroxyasparagine. The region spanning 990–1029 (DIDECLTPSTCPEEQCVNSPGSYQCVPCTEGFRGWNGQCL) is the EGF-like 7; calcium-binding domain. Serine 1011 carries O-linked (Glc) serine glycosylation. Residues 1030–1070 (DVDECLQPKVCTNGSCTNLEGSYMCSCHKGYSPTPDHRHCQ) enclose the EGF-like 8; calcium-binding domain. Asparagine 1042 carries an N-linked (GlcNAc...) asparagine glycan. The O-linked (Glc) serine glycan is linked to serine 1051. In terms of domain architecture, EGF-like 9; calcium-binding spans 1071–1111 (DIDECQQGNLCMNGQCKNTDGSFRCTCGQGYQLSAAKDQCE). Residues 1112-1152 (DIDECEHRHLCSHGQCRNTEGSFQCLCNQGYRASVLGDHCE) form the EGF-like 10; calcium-binding domain. Asparagine 1129 bears the (3R)-3-hydroxyasparagine mark. O-linked (Glc) serine glycosylation is present at serine 1133. Residues 1153–1193 (DINECLEDSSVCQGGDCINTAGSYDCTCPDGLQLNDNKGCQ) enclose the EGF-like 11; calcium-binding domain. Residues 1194 to 1235 (DINECAQPGLCAPHGECLNTQGSFHCVCEQGFSISADGRTCE) form the EGF-like 12; calcium-binding domain. Serine 1216 is a glycosylation site (O-linked (Glc) serine). Residues 1236–1277 (DIDECVNNTVCDSHGFCDNTAGSFRCLCYQGFQAPQDGQGCV) enclose the EGF-like 13; calcium-binding domain. N-linked (GlcNAc...) asparagine glycosylation occurs at asparagine 1242. In terms of domain architecture, EGF-like 14; calcium-binding spans 1278 to 1320 (DVNECELLSGVCGEAFCENVEGSFLCVCADENQEYSPMTGQCR). The segment at 1335–1402 (EEKKECYYNL…PRGKGFVPAG (68 aa)) is 8-Cys3 region. The TB 3 domain maps to 1338 to 1392 (KECYYNLNDASLCDNVLAPNVTKQECCCTSGAGWGDNCEIFPCPVQGTAEFSEMC). Residue asparagine 1357 is glycosylated (N-linked (GlcNAc...) asparagine). Residue serine 1405 is modified to Phosphoserine. An EGF-like 15; calcium-binding domain is found at 1415–1457 (DADECLLFGEEICKNGYCLNTQPGYECYCKEGTYYDPVKLQCF). 10 cysteine pairs are disulfide-bonded: cysteine 1419-cysteine 1432, cysteine 1427-cysteine 1441, cysteine 1443-cysteine 1456, cysteine 1462-cysteine 1473, cysteine 1468-cysteine 1482, cysteine 1484-cysteine 1497, cysteine 1517-cysteine 1541, cysteine 1527-cysteine 1553, cysteine 1542-cysteine 1556, and cysteine 1543-cysteine 1568. The EGF-like 16; calcium-binding domain occupies 1458 to 1498 (DMDECQDPNSCIDGQCVNTEGSYNCFCTHPMVLDASEKRCV). Serine 1479 carries an O-linked (Glc) serine glycan. Residues 1498-1712 (VQPTESNEQI…LNLDKDSDLE (215 aa)) are C-terminal domain. A TB 4 domain is found at 1515 to 1568 (DLCWEHLSEEYVCSRPLVGKQTTYTECCCLYGEAWGMQCALCPMKDSDDYAQLC). Phosphoserine occurs at positions 1588 and 1607. One can recognise an EGF-like 17 domain in the interval 1612–1652 (QAEECGILNGCENGRCVRVQEGYTCDCFDGYHLDMAKMTCV). 6 cysteine pairs are disulfide-bonded: cysteine 1616–cysteine 1627, cysteine 1622–cysteine 1636, cysteine 1638–cysteine 1651, cysteine 1657–cysteine 1672, cysteine 1667–cysteine 1681, and cysteine 1683–cysteine 1696. The 45-residue stretch at 1653–1697 (DVNECSELNNRMSLCKNAKCINTEGSYKCVCLPGYVPSDKPNYCT) folds into the EGF-like 18; calcium-binding domain. Residue serine 1678 is glycosylated (O-linked (Glc) serine).

It belongs to the LTBP family. As to quaternary structure, interacts with TGFB1; associates via disulfide bonds with the Latency-associated peptide chain (LAP) regulatory chain of TGFB1, leading to regulate activation of TGF-beta-1. LTBP1 does not bind directly to TGF-beta-1, the active chain of TGFB1. Interacts (via C-terminal domain) with FBN1 (via N-terminal domain). Interacts with FBN2. Interacts with ADAMTSL2. Interacts with EFEMP2. Post-translationally, contains hydroxylated asparagine residues. Two intrachain disulfide bonds from the TB3 domain are rearranged upon TGFB1 binding, and form interchain bonds with TGFB1 propeptide, anchoring it to the extracellular matrix. In terms of processing, O-glycosylated on serine residues by POGLUT2 and POGLUT3.

The protein localises to the secreted. Its subcellular location is the extracellular space. The protein resides in the extracellular matrix. Functionally, key regulator of transforming growth factor beta (TGFB1, TGFB2 and TGFB3) that controls TGF-beta activation by maintaining it in a latent state during storage in extracellular space. Associates specifically via disulfide bonds with the Latency-associated peptide (LAP), which is the regulatory chain of TGF-beta, and regulates integrin-dependent activation of TGF-beta. Outcompeted by LRRC32/GARP for binding to LAP regulatory chain of TGF-beta. The chain is Latent-transforming growth factor beta-binding protein 1 (Ltbp1) from Rattus norvegicus (Rat).